Reading from the N-terminus, the 265-residue chain is Hydroxyethylthiazole kinase (265 aa).

M50 is a substrate binding site. ATP contacts are provided by R125 and T171. G198 contacts substrate.

Belongs to the Thz kinase family. It depends on Mg(2+) as a cofactor.

It catalyses the reaction 5-(2-hydroxyethyl)-4-methylthiazole + ATP = 4-methyl-5-(2-phosphooxyethyl)-thiazole + ADP + H(+). The protein operates within cofactor biosynthesis; thiamine diphosphate biosynthesis; 4-methyl-5-(2-phosphoethyl)-thiazole from 5-(2-hydroxyethyl)-4-methylthiazole: step 1/1. In terms of biological role, catalyzes the phosphorylation of the hydroxyl group of 4-methyl-5-beta-hydroxyethylthiazole (THZ). The sequence is that of Hydroxyethylthiazole kinase from Salmonella newport (strain SL254).